The chain runs to 482 residues: MFS-type transporter cnsL (482 aa).

A helical transmembrane segment spans residues 73 to 93 (LFVCATLSGLDKTAISAAAVY). A glycan (N-linked (GlcNAc...) asparagine) is linked at asparagine 100. The next 9 membrane-spanning stretches (helical) occupy residues 108-128 (WIGS…AYCL), 131-151 (VPAV…EMSV), 170-190 (IILN…VGYY), 199-219 (IIFL…YFVL), 304-324 (LLAM…SYLA), 333-353 (AIVT…YALP), 361-381 (LVGL…VSVY), 392-412 (ITLY…GPQT), and 426-446 (VAMI…GVVC).

It belongs to the major facilitator superfamily. Allantoate permease family.

The protein resides in the cell membrane. MFS-type transporter; part of the gene cluster that mediates the biosynthesis of communesins, a prominent class of indole alkaloids with great potential as pharmaceuticals. With the MFS transporter cnsO, is most likely responsible for cummunesins secretion and thereby may contribute to intrinsic resistance. In Penicillium expansum (Blue mold rot fungus), this protein is MFS-type transporter cnsL.